Reading from the N-terminus, the 553-residue chain is Formate--tetrahydrofolate ligase (553 aa).

An ATP-binding site is contributed by 56-63; it reads TPKGEGKT.

The protein belongs to the formate--tetrahydrofolate ligase family.

It carries out the reaction (6S)-5,6,7,8-tetrahydrofolate + formate + ATP = (6R)-10-formyltetrahydrofolate + ADP + phosphate. Its pathway is one-carbon metabolism; tetrahydrofolate interconversion. This is Formate--tetrahydrofolate ligase from Haloarcula marismortui (strain ATCC 43049 / DSM 3752 / JCM 8966 / VKM B-1809) (Halobacterium marismortui).